A 388-amino-acid chain; its full sequence is Glucose-1-phosphate adenylyltransferase (388 aa).

Residues Y100, G165, 180 to 181, and S191 each bind alpha-D-glucose 1-phosphate; that span reads EK.

Belongs to the bacterial/plant glucose-1-phosphate adenylyltransferase family. Homotetramer.

It carries out the reaction alpha-D-glucose 1-phosphate + ATP + H(+) = ADP-alpha-D-glucose + diphosphate. The protein operates within glycan biosynthesis; glycogen biosynthesis. Its function is as follows. Involved in the biosynthesis of ADP-glucose, a building block required for the elongation reactions to produce glycogen. Catalyzes the reaction between ATP and alpha-D-glucose 1-phosphate (G1P) to produce pyrophosphate and ADP-Glc. The polypeptide is Glucose-1-phosphate adenylyltransferase (Clostridium perfringens (strain SM101 / Type A)).